A 142-amino-acid chain; its full sequence is Nucleoside diphosphate kinase (142 aa).

Residues K9, F57, R85, T91, R102, and N112 each coordinate ATP. H115 functions as the Pros-phosphohistidine intermediate in the catalytic mechanism.

The protein belongs to the NDK family. As to quaternary structure, homotetramer. The cofactor is Mg(2+).

It localises to the cytoplasm. The catalysed reaction is a 2'-deoxyribonucleoside 5'-diphosphate + ATP = a 2'-deoxyribonucleoside 5'-triphosphate + ADP. It catalyses the reaction a ribonucleoside 5'-diphosphate + ATP = a ribonucleoside 5'-triphosphate + ADP. In terms of biological role, major role in the synthesis of nucleoside triphosphates other than ATP. The ATP gamma phosphate is transferred to the NDP beta phosphate via a ping-pong mechanism, using a phosphorylated active-site intermediate. This is Nucleoside diphosphate kinase from Dehalococcoides mccartyi (strain CBDB1).